Here is a 273-residue protein sequence, read N- to C-terminus: GDNF family receptor alpha-4 (273 aa).

Asn-192 carries N-linked (GlcNAc...) asparagine glycosylation. A lipid anchor (GPI-anchor amidated asparagine) is attached at Asn-250. The propeptide at 251–273 is removed in mature form; sequence AGCCFLWVSSMSILTALALQALL.

This sequence belongs to the GDNFR family. Interacts with ARTN ligand and RET: forms a 2:2:2 ternary complex composed of ARTN ligand, GFRA3 and RET receptor. Interacts with SORL1. As to expression, weakly expressed in heart, brain and testis.

The protein resides in the cell membrane. The protein localises to the secreted. Receptor for persephin (PSPN), a growth factor that exhibits neurotrophic activity on mesencephalic dopaminergic and motor neurons. Acts by binding to its coreceptor, GFRA4, leading to autophosphorylation and activation of the RET receptor. May be important in C-cell development and, in the postnatal development of the adrenal medulla. The chain is GDNF family receptor alpha-4 (Gfra4) from Rattus norvegicus (Rat).